The primary structure comprises 113 residues: Large ribosomal subunit protein bL19 (113 aa).

This sequence belongs to the bacterial ribosomal protein bL19 family.

Functionally, this protein is located at the 30S-50S ribosomal subunit interface and may play a role in the structure and function of the aminoacyl-tRNA binding site. The sequence is that of Large ribosomal subunit protein bL19 from Mycobacterium avium (strain 104).